The chain runs to 525 residues: D-3-phosphoglycerate dehydrogenase (525 aa).

Residues 148-149, D168, T200, 227-229, and D253 each bind NAD(+); these read RI and CAR. The active site involves R229. E258 is an active-site residue. H276 acts as the Proton donor in catalysis. 276–279 serves as a coordination point for NAD(+); sequence HLGA. The ACT domain maps to 452 to 524; it reads LVYIQHQDTT…DIVSVKLIDL (73 aa).

Belongs to the D-isomer specific 2-hydroxyacid dehydrogenase family.

It catalyses the reaction (2R)-3-phosphoglycerate + NAD(+) = 3-phosphooxypyruvate + NADH + H(+). The catalysed reaction is (R)-2-hydroxyglutarate + NAD(+) = 2-oxoglutarate + NADH + H(+). It participates in amino-acid biosynthesis; L-serine biosynthesis; L-serine from 3-phospho-D-glycerate: step 1/3. In bacteria displays feedback inhibition by L-serine. Its function is as follows. Catalyzes the reversible oxidation of 3-phospho-D-glycerate to 3-phosphonooxypyruvate, the first step of the phosphorylated L-serine biosynthesis pathway. Also catalyzes the reversible oxidation of 2-hydroxyglutarate to 2-oxoglutarate. The sequence is that of D-3-phosphoglycerate dehydrogenase (serA) from Bacillus subtilis (strain 168).